Consider the following 571-residue polypeptide: MDTKKEIKNNNFICQIINKDLNENKNLSFYTRFPPEPNGYLHIGHAKSICLNFELASLYKGRCNLRFDDTNPLKENIKYIKSIKHDINWLGYKWHGNVRYASEYFLKLYQYAQELIKKGLAYVDHLTKEQIREYRGTLNTPGKNSPYRNRTIQENIELFEKMKKGDFSEGEACLRAKINMSSSSIIMRDPVLYRIIFIKHHQTQNKWCIYPMYDFAHCLSDSIEGITHSLCTLEFQDNKFLYNWILKNTSVKHYPKQYEFSRLNLEFSILSKRKIKILIDKNIIEGWDDPRIPTLSALRRKGYTPSSIKNFCQKIGVTKQNNLIEFSMLEHCIRKELNQTAIRTMAILDPIKIFLYNLDSNYKEEFIVPNHPNNPEMGTHKIIFTNTIYIDRSDFKEKYDKKYKRLKLGEKIRLRYSYIIHAEKIEKDEYGNISNIICYCDLNTLGRKPKDNKNPAVIHWISEKNTLSAEFKLYDQLFNIKNPEQQENFLLYINSKSLIKKFGFIEKKIGEEIQKKISNNNIEIFFQFERIGYFCIDFIDSKKNQLVFNRTVGLRDTWDSKKIKTKNITNN.

The short motif at 35–45 (PEPNGYLHIGH) is the 'HIGH' region element. Residues 36-38 (EPN) and 42-48 (HIGHAKS) each bind ATP. L-glutamine-binding residues include Asp-68 and Tyr-213. ATP contacts are provided by residues Thr-232, 262 to 263 (RL), and 270 to 272 (LSK). A 'KMSKS' region motif is present at residues 269 to 273 (ILSKR).

This sequence belongs to the class-I aminoacyl-tRNA synthetase family. Monomer.

It is found in the cytoplasm. It carries out the reaction tRNA(Gln) + L-glutamine + ATP = L-glutaminyl-tRNA(Gln) + AMP + diphosphate. The protein is Glutamine--tRNA ligase of Buchnera aphidicola subsp. Acyrthosiphon pisum (strain Tuc7).